The primary structure comprises 777 residues: UPF0313 protein VP1980 (777 aa).

The Radical SAM core domain maps to 363-642; the sequence is AYDMIKTSVN…KALLRYHDPA (280 aa). 3 residues coordinate [4Fe-4S] cluster: Cys-377, Cys-381, and Cys-384. A disordered region spans residues 675–777; it reads AQTPAQRRKS…PAGQRKPKRR (103 aa). Residues 680–698 show a composition bias toward basic residues; it reads QRRKSGRHGANRFATKHTK. The span at 709-719 shows a compositional bias: basic and acidic residues; sequence KRAEGGSKDGK. The segment covering 736–747 has biased composition (polar residues); sequence PASNGQRPSGNG. Over residues 755–769 the composition is skewed to low complexity; sequence KPQGQGRPQGQGKPA.

It belongs to the UPF0313 family. Requires [4Fe-4S] cluster as cofactor.

In Vibrio parahaemolyticus serotype O3:K6 (strain RIMD 2210633), this protein is UPF0313 protein VP1980.